The following is a 568-amino-acid chain: Dihydroxy-acid dehydratase (568 aa).

Cysteine 59 contributes to the [2Fe-2S] cluster binding site. Aspartate 91 contacts Mg(2+). Residue cysteine 132 coordinates [2Fe-2S] cluster. Positions 133 and 134 each coordinate Mg(2+). Lysine 134 bears the N6-carboxylysine mark. Cysteine 204 provides a ligand contact to [2Fe-2S] cluster. Glutamate 456 is a Mg(2+) binding site. The Proton acceptor role is filled by serine 482.

Belongs to the IlvD/Edd family. Homodimer. [2Fe-2S] cluster serves as cofactor. It depends on Mg(2+) as a cofactor.

It carries out the reaction (2R)-2,3-dihydroxy-3-methylbutanoate = 3-methyl-2-oxobutanoate + H2O. It catalyses the reaction (2R,3R)-2,3-dihydroxy-3-methylpentanoate = (S)-3-methyl-2-oxopentanoate + H2O. Its pathway is amino-acid biosynthesis; L-isoleucine biosynthesis; L-isoleucine from 2-oxobutanoate: step 3/4. It participates in amino-acid biosynthesis; L-valine biosynthesis; L-valine from pyruvate: step 3/4. Functionally, functions in the biosynthesis of branched-chain amino acids. Catalyzes the dehydration of (2R,3R)-2,3-dihydroxy-3-methylpentanoate (2,3-dihydroxy-3-methylvalerate) into 2-oxo-3-methylpentanoate (2-oxo-3-methylvalerate) and of (2R)-2,3-dihydroxy-3-methylbutanoate (2,3-dihydroxyisovalerate) into 2-oxo-3-methylbutanoate (2-oxoisovalerate), the penultimate precursor to L-isoleucine and L-valine, respectively. This is Dihydroxy-acid dehydratase from Verminephrobacter eiseniae (strain EF01-2).